The primary structure comprises 1560 residues: BRD4-interacting chromatin-remodeling complex-associated protein (1560 aa).

Disordered stretches follow at residues 53-99 (VQEA…GADQ), 624-688 (APQA…ATPT), 723-949 (IVSA…VTTP), 974-1028 (NKAG…TGLP), 1049-1075 (KAASSGPGKPSGLQYESKLSGLKKPPT), and 1215-1300 (SSEG…IKTY). Over residues 86–96 (ATGGGGGGSGG) the composition is skewed to gly residues. A compositionally biased stretch (low complexity) spans 624 to 664 (APQAPPAVSTPLPLGLQQPQAQQPPQAPTPQAAAPPQATTP). Residues 726–736 (APPPAQDPAPA) show a composition bias toward pro residues. Low complexity predominate over residues 747 to 780 (PQAPDSQASPAPAPQIPAAAPLKGPGPSSSPSLP). Composition is skewed to pro residues over residues 791–806 (LPSPHPTRPPSRPPSR), 814–831 (PSEPPLHPCPPPQAPPTL), and 843–880 (VPPPASNPAPTAPGPPQPPLRPQSQPPEGPLPPAPHLP). A compositionally biased stretch (low complexity) spans 881 to 896 (PSSTSSAVASSSETSS). The residue at position 919 (Ser919) is a Phosphoserine. Thr921 is subject to Phosphothreonine. Residues 932 to 941 (PAAPPPPPPR) are compositionally biased toward pro residues. Positions 1005–1028 (APSGTPTAPSHAPAPAPMAATGLP) are enriched in low complexity. Lys1057 is subject to N6-acetyllysine. Positions 1227 to 1236 (LSSSAPGAST) are enriched in polar residues. Over residues 1264 to 1281 (ASSSLSSSSSSSSAASSL) the composition is skewed to low complexity. Lys1313 is covalently cross-linked (Glycyl lysine isopeptide (Lys-Gly) (interchain with G-Cter in SUMO2)). Disordered stretches follow at residues 1324–1424 (NTAL…VDEA) and 1440–1560 (YQRM…TLTR). Pro residues predominate over residues 1331–1356 (HQPPPPPATLKVAEPPPRPPPPPPPT). Residues 1401-1412 (PEGTPAGRARGG) are compositionally biased toward low complexity. Ser1413 carries the phosphoserine modification. Positions 1485-1515 (ASFSSDSPQDDTLTEHLQSAIDSILNLQQAP) are enriched in polar residues.

As to quaternary structure, component of the multiprotein chromatin-remodeling complexes SWI/SNF: SWI/SNF-A (BAF), SWI/SNF-B (PBAF) and related complexes. The canonical complex contains a catalytic subunit (either SMARCA4/BRG1/BAF190A or SMARCA2/BRM/BAF190B) and at least SMARCE1, ACTL6A/BAF53, SMARCC1/BAF155, SMARCC2/BAF170, and SMARCB1/SNF5/BAF47. Other subunits specific to each of the complexes may also be present permitting several possible combinations developmentally and tissue specific. Component of the SWI/SNF (GBAF) subcomplex, which includes at least BICRA or BICRAL (mutually exclusive), BRD9, SS18, the core BAF subunits, SMARCA2/BRM, SMARCA4/BRG1/BAF190A, ACTL6A/BAF53, SMARCC1/BAF155, and SMARCD1/BAF60A. Interacts with BRD4; the interaction bridges BRD4 to the GBAF complex. In terms of tissue distribution, expressed at moderate levels in heart, brain, placenta, skeletal muscle, and pancreas, and at lower levels in lung, liver and kidney.

Its subcellular location is the nucleus. Functionally, component of SWI/SNF chromatin remodeling subcomplex GBAF that carries out key enzymatic activities, changing chromatin structure by altering DNA-histone contacts within a nucleosome in an ATP-dependent manner. May play a role in BRD4-mediated gene transcription. This chain is BRD4-interacting chromatin-remodeling complex-associated protein, found in Homo sapiens (Human).